The chain runs to 270 residues: Phosphonoacetaldehyde hydrolase (270 aa).

Asp11 serves as the catalytic Nucleophile. Residues Asp11 and Ala13 each contribute to the Mg(2+) site. Catalysis depends on Lys53, which acts as the Schiff-base intermediate with substrate. Asp187 contributes to the Mg(2+) binding site.

This sequence belongs to the HAD-like hydrolase superfamily. PhnX family. In terms of assembly, homodimer. Mg(2+) is required as a cofactor.

It carries out the reaction phosphonoacetaldehyde + H2O = acetaldehyde + phosphate + H(+). Involved in phosphonate degradation. This Salmonella gallinarum (strain 287/91 / NCTC 13346) protein is Phosphonoacetaldehyde hydrolase.